A 470-amino-acid chain; its full sequence is Carboxypeptidase Q (470 aa).

The N-terminal stretch at 1-18 is a signal peptide; that stretch reads MRSLFFLFIVHLLALGSG. A propeptide spanning residues 19–42 is cleaved from the precursor; it reads KAVFKNGVSQRTFREIKEEIANYE. N59 carries N-linked (GlcNAc...) asparagine glycosylation. 2 residues coordinate Zn(2+): H288 and D300. E334 acts as the Nucleophile in catalysis. E335 contacts Zn(2+). N351 carries an N-linked (GlcNAc...) asparagine glycan. Residue D362 coordinates Zn(2+). N394 carries N-linked (GlcNAc...) asparagine glycosylation. H432 contacts Zn(2+).

It belongs to the peptidase M28 family. In terms of assembly, homodimer. The monomeric form is inactive while the homodimer is active. In terms of processing, N-glycosylated. The secreted form is modified by hybrid or complex type oligosaccharide chains.

Its subcellular location is the endoplasmic reticulum. The protein localises to the golgi apparatus. The protein resides in the lysosome. It is found in the secreted. Its function is as follows. Carboxypeptidase that may play an important role in the hydrolysis of circulating peptides. Catalyzes the hydrolysis of dipeptides with unsubstituted terminals into amino acids. May play a role in the liberation of thyroxine hormone from its thyroglobulin (Tg) precursor. This Mus musculus (Mouse) protein is Carboxypeptidase Q (Cpq).